The chain runs to 783 residues: Spindle pole body protein ppc89 (783 aa).

Ser-157 bears the Phosphoserine mark. Disordered stretches follow at residues 180–216 (FDSP…ETPS), 434–458 (KESN…MNEA), 471–504 (ENKS…PTSG), and 528–610 (LSQS…MKGN). 3 stretches are compositionally biased toward polar residues: residues 201–216 (RSKT…ETPS), 437–453 (NVTS…SKPL), and 474–504 (SGAN…PTSG). Basic residues predominate over residues 536-551 (PVKHRKRRPKSKRRIT). Over residues 566-590 (ESDEGSEEISLDSEYSDILSDDGDF) the composition is skewed to acidic residues.

The protein localises to the cytoplasm. It localises to the cytoskeleton. Its subcellular location is the microtubule organizing center. The protein resides in the spindle pole body. Functionally, has a role in meiosis. This chain is Spindle pole body protein ppc89 (ppc89), found in Schizosaccharomyces pombe (strain 972 / ATCC 24843) (Fission yeast).